The chain runs to 167 residues: Small ribosomal subunit protein uS5 (167 aa).

The S5 DRBM domain occupies 12–75 (LQEKLITVNR…EQARRNMITI (64 aa)).

This sequence belongs to the universal ribosomal protein uS5 family. Part of the 30S ribosomal subunit. Contacts proteins S4 and S8.

In terms of biological role, with S4 and S12 plays an important role in translational accuracy. Functionally, located at the back of the 30S subunit body where it stabilizes the conformation of the head with respect to the body. The polypeptide is Small ribosomal subunit protein uS5 (Buchnera aphidicola subsp. Acyrthosiphon pisum (strain APS) (Acyrthosiphon pisum symbiotic bacterium)).